A 172-amino-acid chain; its full sequence is Large ribosomal subunit protein uL10 (172 aa).

This sequence belongs to the universal ribosomal protein uL10 family. Part of the ribosomal stalk of the 50S ribosomal subunit. The N-terminus interacts with L11 and the large rRNA to form the base of the stalk. The C-terminus forms an elongated spine to which L12 dimers bind in a sequential fashion forming a multimeric L10(L12)X complex.

Forms part of the ribosomal stalk, playing a central role in the interaction of the ribosome with GTP-bound translation factors. The sequence is that of Large ribosomal subunit protein uL10 from Francisella tularensis subsp. tularensis (strain FSC 198).